A 488-amino-acid polypeptide reads, in one-letter code: MALKNKVQLITYPDSLGGNLKTLNDVLEKYFSDVFGGVHILPPFPSSGDRGFAPITYSEIEPKFGTWYDIKKMAENFDILLDLMVNHVSRRSIYFQDFLKKGRKSEYADMFITLDKLWKDGKPVKGDIEKMFLRRTLPYSTFKIEETGEEEKVWTTFGKTDPSEQIDLDVNSHLVREFLLEVFKTFSNFGVKIVRLDAVGYVIKKIGTSCFFVEPEIYEFLDWAKGQAASYGIELLLEVHSQFEVQYKLAERGFLIYDFILPFTVLYTLINKSNEMLYHYLKNRPINQFTMLDCHDGIPVKPDLDGLIDTKKAKEVVDICVQRGANLSLIYGDKYKSEDGFDVHQINCTYYSALNCDDDAYLAARAIQFFTPGIPQVYYVGLLAGVNDFEAVKKTKEGREINRHNYGLKEIEESVQKNVVQRLLKLIRFRNEYEAFNGEFFIEDCRKDEIRLTWKKDDKRCSLFIDLKTYKTTIDYINENGEEVKYLV.

Residues Asp-49, His-87, 195-197 (RLD), Glu-238, 295-296 (HD), 342-345 (DVHQ), and Arg-399 each bind sucrose 6(F)-phosphate. The active-site Nucleophile is Asp-197. Glu-238 (proton donor/acceptor) is an active-site residue.

Belongs to the glycosyl hydrolase 13 family. Sucrose phosphorylase subfamily. Monomer.

The enzyme catalyses sucrose 6(F)-phosphate + phosphate = beta-D-fructose 6-phosphate + alpha-D-glucose 1-phosphate. Functionally, catalyzes the reversible phosphorolysis of sucrose 6(F)-phosphate into alpha-D-glucose 1-phosphate (Glc1P) and D-fructose 6-phosphate. May be involved in a new pathway for the degradation of sucrose, which could become phosphorylated on its fructose moiety during uptake via a PTS system. To a lesser extent, can also reversibly act on sucrose in vitro. Is also able to catalyze transglycosylation reactions in vitro. This is Sucrose 6(F)-phosphate phosphorylase from Thermoanaerobacterium thermosaccharolyticum (strain ATCC 7956 / DSM 571 / NCIMB 9385 / NCA 3814 / NCTC 13789 / WDCM 00135 / 2032) (Clostridium thermosaccharolyticum).